Here is a 999-residue protein sequence, read N- to C-terminus: Probable hemoglobin and hemoglobin-haptoglobin-binding protein 4 (999 aa).

The first 24 residues, 1–24, serve as a signal peptide directing secretion; that stretch reads MTNFRLNVLAYSVMLGLTASVAYA. The disordered stretch occupies residues 25–52; sequence EPTNQPTNQPTNQPTNQPTNQPTNQNSN. Repeat copies occupy residues 26 to 29, 30 to 33, 34 to 37, 38 to 41, 42 to 45, and 46 to 49. The 6 X 4 AA tandem repeats of P-T-N-Q stretch occupies residues 26–49; the sequence is PTNQPTNQPTNQPTNQPTNQPTNQ. The span at 26-50 shows a compositional bias: low complexity; the sequence is PTNQPTNQPTNQPTNQPTNQPTNQN. Residues 58–65 carry the TonB box motif; that stretch reads EQINVLGS. The TBDR plug domain occupies 68–195; that stretch reads NNDNTPPKIA…LGGAVLFETK (128 aa). The TBDR beta-barrel domain occupies 203-999; that stretch reads EKDWHIGYKA…NYKLSAEITF (797 aa). A TonB C-terminal box motif is present at residues 982 to 999; sequence NRFYSPGRNYKLSAEITF.

The protein belongs to the TonB-dependent receptor family. Hemoglobin/haptoglobin binding protein subfamily.

The protein localises to the cell outer membrane. Its function is as follows. Acts as a receptor for hemoglobin or the hemoglobin/haptoglobin complex of the human host and is required for heme uptake. The polypeptide is Probable hemoglobin and hemoglobin-haptoglobin-binding protein 4 (Haemophilus influenzae (strain ATCC 51907 / DSM 11121 / KW20 / Rd)).